Here is a 329-residue protein sequence, read N- to C-terminus: GTP 3',8-cyclase (329 aa).

The region spanning 8–234 (AFARKFYYLR…QLRQRSDGPA (227 aa)) is the Radical SAM core domain. Arginine 17 serves as a coordination point for GTP. [4Fe-4S] cluster is bound by residues cysteine 24 and cysteine 28. Tyrosine 30 provides a ligand contact to S-adenosyl-L-methionine. Cysteine 31 provides a ligand contact to [4Fe-4S] cluster. Arginine 68 contributes to the GTP binding site. S-adenosyl-L-methionine is bound at residue glycine 72. Threonine 99 serves as a coordination point for GTP. Serine 123 lines the S-adenosyl-L-methionine pocket. GTP is bound at residue lysine 160. Methionine 194 provides a ligand contact to S-adenosyl-L-methionine. Residues cysteine 257 and cysteine 260 each coordinate [4Fe-4S] cluster. Position 262 to 264 (262 to 264 (RLR)) interacts with GTP. Cysteine 274 lines the [4Fe-4S] cluster pocket.

The protein belongs to the radical SAM superfamily. MoaA family. As to quaternary structure, monomer and homodimer. Requires [4Fe-4S] cluster as cofactor.

It carries out the reaction GTP + AH2 + S-adenosyl-L-methionine = (8S)-3',8-cyclo-7,8-dihydroguanosine 5'-triphosphate + 5'-deoxyadenosine + L-methionine + A + H(+). Its pathway is cofactor biosynthesis; molybdopterin biosynthesis. Functionally, catalyzes the cyclization of GTP to (8S)-3',8-cyclo-7,8-dihydroguanosine 5'-triphosphate. This Escherichia coli O127:H6 (strain E2348/69 / EPEC) protein is GTP 3',8-cyclase.